Consider the following 795-residue polypeptide: Protein ROOT HAIR DEFECTIVE 3 homolog 1 (795 aa).

The Cytoplasmic segment spans residues 1 to 682 (MDADKSEGCC…EANRRGNNWL (682 aa)). One can recognise a GB1/RHD3-type G domain in the interval 39 to 254 (GLSYAVVSIM…IAPGGLAGDR (216 aa)). 49–56 (GPQSSGKS) contributes to the GTP binding site. Positions 218-244 (VALSSYEEKEEQFKEQIASLRQRFMHS) form a coiled coil. A helical transmembrane segment spans residues 683–703 (PPPWAILALIVLGFNEFMTLL). Residues 704–706 (RNP) lie on the Lumenal side of the membrane. A helical membrane pass occupies residues 707 to 727 (LYLGVMFVAFLLAKALWTQLD). The Cytoplasmic segment spans residues 728–795 (IPGEFRNGAL…PDHKSSSKED (68 aa)). The tract at residues 761 to 795 (QGEDPPAANPENRRSSNNTSSSENPPDHKSSSKED) is disordered. The segment covering 775-784 (SSNNTSSSEN) has biased composition (low complexity). A compositionally biased stretch (basic and acidic residues) spans 785 to 795 (PPDHKSSSKED).

This sequence belongs to the TRAFAC class dynamin-like GTPase superfamily. GB1/RHD3 GTPase family. RHD3 subfamily. Specifically expressed in flowers.

The protein resides in the endoplasmic reticulum membrane. In terms of biological role, probable GTP-binding protein that may be involved in cell development. This Arabidopsis thaliana (Mouse-ear cress) protein is Protein ROOT HAIR DEFECTIVE 3 homolog 1.